A 267-amino-acid chain; its full sequence is 2-keto-3-deoxy-L-rhamnonate aldolase (267 aa).

Histidine 49 acts as the Proton acceptor in catalysis. Position 151 (glutamine 151) interacts with substrate. Glutamate 153 provides a ligand contact to Mg(2+). Substrate-binding residues include alanine 178 and aspartate 179. Aspartate 179 is a binding site for Mg(2+).

The protein belongs to the HpcH/HpaI aldolase family. KDR aldolase subfamily. In terms of assembly, homohexamer. Mg(2+) serves as cofactor.

It catalyses the reaction 2-dehydro-3-deoxy-L-rhamnonate = (S)-lactaldehyde + pyruvate. Its function is as follows. Catalyzes the reversible retro-aldol cleavage of 2-keto-3-deoxy-L-rhamnonate (KDR) to pyruvate and lactaldehyde. The chain is 2-keto-3-deoxy-L-rhamnonate aldolase from Klebsiella pneumoniae subsp. pneumoniae (strain ATCC 700721 / MGH 78578).